We begin with the raw amino-acid sequence, 66 residues long: Photosystem II reaction center protein H (66 aa).

Residues 29–49 (PIMGLTMVLFLVFLLIILQIY) traverse the membrane as a helical segment.

Belongs to the PsbH family. As to quaternary structure, PSII is composed of 1 copy each of membrane proteins PsbA, PsbB, PsbC, PsbD, PsbE, PsbF, PsbH, PsbI, PsbJ, PsbK, PsbL, PsbM, PsbT, PsbX, PsbY, PsbZ, Psb30/Ycf12, at least 3 peripheral proteins of the oxygen-evolving complex and a large number of cofactors. It forms dimeric complexes.

The protein resides in the plastid. Its subcellular location is the chloroplast thylakoid membrane. In terms of biological role, one of the components of the core complex of photosystem II (PSII), required for its stability and/or assembly. PSII is a light-driven water:plastoquinone oxidoreductase that uses light energy to abstract electrons from H(2)O, generating O(2) and a proton gradient subsequently used for ATP formation. It consists of a core antenna complex that captures photons, and an electron transfer chain that converts photonic excitation into a charge separation. This is Photosystem II reaction center protein H from Thalassiosira pseudonana (Marine diatom).